Consider the following 98-residue polypeptide: uncharacterized protein (98 aa).

This is an uncharacterized protein from Dictyostelium discoideum (Social amoeba).